Here is an 837-residue protein sequence, read N- to C-terminus: Periplasmic nitrate reductase (837 aa).

Positions 1-33 (MTTPKLDRRQVLKLEAAAMAALAGGIAMPAAAA) form a signal peptide, tat-type signal. One can recognise a 4Fe-4S Mo/W bis-MGD-type domain in the interval 44-100 (LKWDKAACRFCGTGCSVMVATKENRVVATHGDTKSEVNRGLNCVKGYFLSKIMYGHD). The [4Fe-4S] cluster site is built by Cys-51, Cys-54, Cys-58, and Cys-86. Mo-bis(molybdopterin guanine dinucleotide)-binding positions include Lys-88, Gln-155, Asn-180, Cys-184, 217–224 (WGSNMAEM), 248–252 (STFEH), 267–269 (QTD), Met-378, Gln-382, Asn-488, 514–515 (SD), Lys-537, Asp-564, and 724–733 (TGRVLEHWHS). Residue Trp-800 coordinates substrate. Positions 808 and 825 each coordinate Mo-bis(molybdopterin guanine dinucleotide).

It belongs to the prokaryotic molybdopterin-containing oxidoreductase family. NasA/NapA/NarB subfamily. As to quaternary structure, component of the periplasmic nitrate reductase NapAB complex composed of NapA and NapB. [4Fe-4S] cluster is required as a cofactor. The cofactor is Mo-bis(molybdopterin guanine dinucleotide). In terms of processing, predicted to be exported by the Tat system. The position of the signal peptide cleavage has not been experimentally proven.

The protein resides in the periplasm. The catalysed reaction is 2 Fe(II)-[cytochrome] + nitrate + 2 H(+) = 2 Fe(III)-[cytochrome] + nitrite + H2O. Its function is as follows. Catalytic subunit of the periplasmic nitrate reductase complex NapAB. Receives electrons from NapB and catalyzes the reduction of nitrate to nitrite. The protein is Periplasmic nitrate reductase of Rhodopseudomonas palustris (strain BisB18).